An 83-amino-acid chain; its full sequence is Small ribosomal subunit protein bS16 (83 aa).

Belongs to the bacterial ribosomal protein bS16 family.

The polypeptide is Small ribosomal subunit protein bS16 (Pseudomonas putida (strain W619)).